The chain runs to 108 residues: Insulin-1 (108 aa).

A signal peptide spans 1 to 24 (MALLVHFLPLLALLALWEPKPTQA). Disulfide bonds link cysteine 31–cysteine 94, cysteine 43–cysteine 107, and cysteine 93–cysteine 98. A propeptide spans 57-85 (EVEDPQVEQLELGGSPGDLQTLALEVARQ) (c peptide).

The protein belongs to the insulin family. Heterodimer of a B chain and an A chain linked by two disulfide bonds.

The protein resides in the secreted. Functionally, insulin decreases blood glucose concentration. It increases cell permeability to monosaccharides, amino acids and fatty acids. It accelerates glycolysis, the pentose phosphate cycle, and glycogen synthesis in liver. The chain is Insulin-1 (Ins1) from Mus musculus (Mouse).